Here is a 987-residue protein sequence, read N- to C-terminus: Collagen alpha-1(I) chain (987 aa).

The segment covering 1-21 (SVPGPMGPSGPRGLPGPPGPG) has biased composition (pro residues). Residues 1–987 (SVPGPMGPSG…PGPPGPPGPP (987 aa)) are disordered. A 4-hydroxyproline mark is found at Pro15, Pro18, Pro20, Pro29, Pro32, Pro35, Pro50, Pro65, Pro71, Pro80, and Pro86. Positions 23-41 (QGFQGPPGEPGEPGSSGPM) are enriched in low complexity. A compositionally biased stretch (basic and acidic residues) spans 53–67 (NGDDGEAGKPGRPGE). A 5-hydroxylysine; alternate modification is found at Lys89. O-linked (Gal...) hydroxylysine; alternate glycosylation occurs at Lys89. Ser95 carries the post-translational modification Phosphoserine. Residues 103-119 (DAGPAGPKGEPGSPGEN) show a composition bias toward low complexity. 4-hydroxyproline is present on residues Pro113, Pro116, Pro122, Pro131, Pro137, Pro158, Pro167, Pro170, Pro197, Pro200, Pro212, Pro218, Pro227, Pro233, Pro236, and Pro251. The segment covering 137-155 (PGASGPAGARGNDGAAGAA) has biased composition (low complexity). The segment covering 157 to 169 (PPGPTGPAGPPGF) has biased composition (pro residues). A compositionally biased stretch (low complexity) spans 203 to 253 (AGAAGPAGNPGADGQPGAKGANGAPGIAGAPGFPGARGPSGPQGPSGAPGP). A 5-hydroxylysine modification is found at Lys254. 4-hydroxyproline is present on residues Pro260, Pro263, Pro275, Pro284, Pro299, Pro305, Pro314, and Pro320. Positions 309-318 (GERGGPGSRG) are enriched in gly residues. Lys329 carries the 5-hydroxylysine modification. 24 positions are modified to 4-hydroxyproline: Pro338, Pro347, Pro353, Pro359, Pro368, Pro371, Pro380, Pro389, Pro395, Pro407, Pro416, Pro425, Pro428, Pro446, Pro468, Pro474, Pro480, Pro486, Pro492, Pro504, Pro513, Pro526, Pro532, and Pro541. Residues 362-388 (KGLTGSPGSPGPDGKTGPPGPAGQDGR) are compositionally biased toward low complexity. Low complexity predominate over residues 397-416 (ARGQAGVMGFPGPKGAAGEP). Over residues 458–483 (QGPAPGFQGLPGPAGPPGEAGKPGEQ) the composition is skewed to low complexity. Lys553 is modified (5-hydroxylysine). A 4-hydroxyproline mark is found at Pro559, Pro574, and Pro580. A compositionally biased stretch (low complexity) spans 586–600 (SGPSGPAGPTGARGA). Phosphoserine is present on Ser589. Pro601, Pro607, Pro610, Pro619, Pro625, Pro643, Pro652, and Pro661 each carry 4-hydroxyproline. Residues 613-640 (AGFAGPPGADGQPGAKGEPGDAGAKGDA) show a composition bias toward low complexity. The span at 642 to 654 (PPGPAGPTGPPGP) shows a compositional bias: pro residues. Lys664 is modified (5-hydroxylysine). Positions 669-685 (SAGPPGATGFPGAAGRV) are enriched in low complexity. Residues Pro673 and Pro679 each carry the 4-hydroxyproline modification. Residue Pro687 is modified to 3-hydroxyproline. 4-hydroxyproline occurs at positions 688, 697, 700, 721, 730, 738, 747, 765, 774, 777, 783, 798, 804, 810, 819, and 825. Residues 714–723 (ETGPAGRPGE) are compositionally biased toward low complexity. Residues 735-747 (KGSPGADGPAGAP) are compositionally biased toward low complexity. Over residues 797–807 (PPGPMGPPGLA) the composition is skewed to pro residues. A compositionally biased stretch (low complexity) spans 809-824 (PPGESGREGSPGAEGS). 5-hydroxylysine is present on Lys834. Positions 843–858 (AGPPGAPGAPGAPGPV) are enriched in pro residues. A 4-hydroxyproline mark is found at Pro846, Pro849, and Pro852. Residues 879–893 (AGPAGARGPAGPQGP) are compositionally biased toward low complexity. A compositionally biased stretch (basic and acidic residues) spans 894-905 (RGDKGETGEQGD). Lys897 bears the 5-hydroxylysine mark. A 4-hydroxyproline mark is found at Pro918, Pro921, Pro939, and Pro954. The segment covering 921 to 954 (PGEQGPSGASGPAGPRGPPGSAGSPGKDGLNGLP) has biased composition (low complexity). A 3-hydroxyproline modification is found at Pro959. A 4-hydroxyproline modification is found at Pro960. A compositionally biased stretch (pro residues) spans 972-987 (VGPPGPPGPPGPPGPP). A 3-hydroxyproline modification is found at Pro974. Position 975 is a 4-hydroxyproline (Pro975). Residue Pro977 is modified to 3-hydroxyproline. The residue at position 978 (Pro978) is a 4-hydroxyproline. Pro980 carries the 3-hydroxyproline modification. 4-hydroxyproline occurs at positions 981, 984, and 987.

Belongs to the fibrillar collagen family. In terms of assembly, trimers of one alpha 2(I) and two alpha 1(I) chains. Post-translationally, contains mostly 4-hydroxyproline. Proline residues at the third position of the tripeptide repeating unit (G-X-Y) are hydroxylated in some or all of the chains. In terms of processing, contains 3-hydroxyproline at a few sites. This modification occurs on the first proline residue in the sequence motif Gly-Pro-Hyp, where Hyp is 4-hydroxyproline. Lysine residues at the third position of the tripeptide repeating unit (G-X-Y) are 5-hydroxylated in some or all of the chains. Post-translationally, O-glycosylated on hydroxylated lysine residues. The O-linked glycan consists of a Glc-Gal disaccharide. In terms of tissue distribution, expressed in bones.

Its subcellular location is the secreted. It localises to the extracellular space. The protein localises to the extracellular matrix. Its function is as follows. Type I collagen is a member of group I collagen (fibrillar forming collagen). The protein is Collagen alpha-1(I) chain of Glossotherium robustum (Ground sloth).